The sequence spans 117 residues: Nascent polypeptide-associated complex protein (117 aa).

The region spanning 3 to 72 (PVNPRDLEKM…YTVEKPREET (70 aa)) is the NAC-A/B domain.

The protein belongs to the NAC-alpha family. In terms of assembly, homodimer. Interacts with the ribosome. Binds ribosomal RNA.

Contacts the emerging nascent chain on the ribosome. The polypeptide is Nascent polypeptide-associated complex protein (Aeropyrum pernix (strain ATCC 700893 / DSM 11879 / JCM 9820 / NBRC 100138 / K1)).